The chain runs to 85 residues: MKMTLIAILTCAAVLVLHITAAEELEAESQLMEVGMPDTELEAVDEERLFECSVSCEIEKEGNKDCKKKKCKGGWKCKFNMCVKV.

Positions 1–22 (MKMTLIAILTCAAVLVLHITAA) are cleaved as a signal peptide. Positions 23–48 (EELEAESQLMEVGMPDTELEAVDEER) are excised as a propeptide. 3 cysteine pairs are disulfide-bonded: cysteine 52-cysteine 66, cysteine 56-cysteine 77, and cysteine 71-cysteine 82.

The protein belongs to the neurotoxin 12 (Hwtx-2) family. 02 (Hwtx-2) subfamily. Monomer. As to expression, expressed by the venom gland.

It localises to the secreted. Neurotoxin active on both insects and mammals. The chain is U4-theraphotoxin-Hhn1a from Cyriopagopus hainanus (Chinese bird spider).